A 514-amino-acid chain; its full sequence is ATP synthase subunit alpha (514 aa).

169–176 (GDRQTGKT) provides a ligand contact to ATP.

This sequence belongs to the ATPase alpha/beta chains family. F-type ATPases have 2 components, CF(1) - the catalytic core - and CF(0) - the membrane proton channel. CF(1) has five subunits: alpha(3), beta(3), gamma(1), delta(1), epsilon(1). CF(0) has three main subunits: a(1), b(2) and c(9-12). The alpha and beta chains form an alternating ring which encloses part of the gamma chain. CF(1) is attached to CF(0) by a central stalk formed by the gamma and epsilon chains, while a peripheral stalk is formed by the delta and b chains.

It localises to the cell membrane. It catalyses the reaction ATP + H2O + 4 H(+)(in) = ADP + phosphate + 5 H(+)(out). Produces ATP from ADP in the presence of a proton gradient across the membrane. The alpha chain is a regulatory subunit. The protein is ATP synthase subunit alpha of Buchnera aphidicola subsp. Baizongia pistaciae (strain Bp).